The sequence spans 390 residues: Alanine racemase (390 aa).

Lys-37 (proton acceptor; specific for D-alanine) is an active-site residue. Lys-37 bears the N6-(pyridoxal phosphate)lysine mark. Arg-135 provides a ligand contact to substrate. The active-site Proton acceptor; specific for L-alanine is the Tyr-274. Residue Met-322 participates in substrate binding.

It belongs to the alanine racemase family. It depends on pyridoxal 5'-phosphate as a cofactor.

It catalyses the reaction L-alanine = D-alanine. It participates in amino-acid biosynthesis; D-alanine biosynthesis; D-alanine from L-alanine: step 1/1. Its function is as follows. Catalyzes the interconversion of L-alanine and D-alanine. May also act on other amino acids. This Desulfosudis oleivorans (strain DSM 6200 / JCM 39069 / Hxd3) (Desulfococcus oleovorans) protein is Alanine racemase (alr).